A 77-amino-acid polypeptide reads, in one-letter code: Translation initiation factor IF-1, chloroplastic (77 aa).

In terms of domain architecture, S1-like spans 1-71; sequence MKEQKWIHEG…TRGRIIYRLR (71 aa).

The protein belongs to the IF-1 family. As to quaternary structure, component of the 30S ribosomal translation pre-initiation complex which assembles on the 30S ribosome in the order IF-2 and IF-3, IF-1 and N-formylmethionyl-tRNA(fMet); mRNA recruitment can occur at any time during PIC assembly.

The protein resides in the plastid. Its subcellular location is the chloroplast. One of the essential components for the initiation of protein synthesis. Stabilizes the binding of IF-2 and IF-3 on the 30S subunit to which N-formylmethionyl-tRNA(fMet) subsequently binds. Helps modulate mRNA selection, yielding the 30S pre-initiation complex (PIC). Upon addition of the 50S ribosomal subunit IF-1, IF-2 and IF-3 are released leaving the mature 70S translation initiation complex. This is Translation initiation factor IF-1, chloroplastic from Spinacia oleracea (Spinach).